The chain runs to 145 residues: Basic phospholipase A2 beta-bungarotoxin A2 chain (145 aa).

A signal peptide spans 1-17; the sequence is MLIFLWCGAVCVSLLGA. Positions 18–25 are excised as a propeptide; it reads ANIPPHPL. 6 disulfides stabilise this stretch: Cys-52–Cys-144, Cys-54–Cys-70, Cys-69–Cys-125, Cys-76–Cys-118, Cys-86–Cys-111, and Cys-104–Cys-116. Residues Tyr-53, Gly-55, and Gly-57 each coordinate Ca(2+). His-73 is a catalytic residue. Residue Asp-74 coordinates Ca(2+). Residue Asp-119 is part of the active site.

This sequence belongs to the phospholipase A2 family. Group I subfamily. D49 sub-subfamily. In terms of assembly, heterodimer; disulfide-linked. The A chains have phospholipase A2 activity and the B chains show homology with the basic protease inhibitors. The A2 chain is found in beta-3 and beta-4 bungarotoxins. Requires Ca(2+) as cofactor. As to expression, expressed by the venom gland.

Its subcellular location is the secreted. It carries out the reaction a 1,2-diacyl-sn-glycero-3-phosphocholine + H2O = a 1-acyl-sn-glycero-3-phosphocholine + a fatty acid + H(+). Its function is as follows. Snake venom phospholipase A2 (PLA2) that inhibits neuromuscular transmission by blocking acetylcholine release from the nerve termini. PLA2 catalyzes the calcium-dependent hydrolysis of the 2-acyl groups in 3-sn-phosphoglycerides. The protein is Basic phospholipase A2 beta-bungarotoxin A2 chain of Bungarus multicinctus (Many-banded krait).